The primary structure comprises 206 residues: High frequency lysogenization protein HflD homolog (206 aa).

It belongs to the HflD family.

The protein localises to the cytoplasm. The protein resides in the cell inner membrane. This Pseudomonas syringae pv. tomato (strain ATCC BAA-871 / DC3000) protein is High frequency lysogenization protein HflD homolog.